The sequence spans 247 residues: Uridylate kinase (247 aa).

18–21 (KLSG) provides a ligand contact to ATP. Position 60 (G60) interacts with UMP. 2 residues coordinate ATP: G61 and R65. Residues D80 and 141 to 148 (TGNPFFTT) contribute to the UMP site. Residues T168, Y174, and D177 each contribute to the ATP site.

It belongs to the UMP kinase family. Homohexamer.

Its subcellular location is the cytoplasm. It catalyses the reaction UMP + ATP = UDP + ADP. Its pathway is pyrimidine metabolism; CTP biosynthesis via de novo pathway; UDP from UMP (UMPK route): step 1/1. Its activity is regulated as follows. Inhibited by UTP. Functionally, catalyzes the reversible phosphorylation of UMP to UDP. The sequence is that of Uridylate kinase from Pseudomonas fluorescens (strain ATCC BAA-477 / NRRL B-23932 / Pf-5).